The primary structure comprises 373 residues: Histidinol-phosphate aminotransferase (373 aa).

At K231 the chain carries N6-(pyridoxal phosphate)lysine.

It belongs to the class-II pyridoxal-phosphate-dependent aminotransferase family. Histidinol-phosphate aminotransferase subfamily. The cofactor is pyridoxal 5'-phosphate.

It carries out the reaction L-histidinol phosphate + 2-oxoglutarate = 3-(imidazol-4-yl)-2-oxopropyl phosphate + L-glutamate. It functions in the pathway amino-acid biosynthesis; L-histidine biosynthesis; L-histidine from 5-phospho-alpha-D-ribose 1-diphosphate: step 7/9. The sequence is that of Histidinol-phosphate aminotransferase (hisC) from Methanocaldococcus jannaschii (strain ATCC 43067 / DSM 2661 / JAL-1 / JCM 10045 / NBRC 100440) (Methanococcus jannaschii).